The sequence spans 171 residues: ATP synthase subunit b (171 aa).

The helical transmembrane segment at 32–52 threads the bilayer; that stretch reads FFAVLLIFLIVLGVIAKWVVP.

This sequence belongs to the ATPase B chain family. In terms of assembly, F-type ATPases have 2 components, F(1) - the catalytic core - and F(0) - the membrane proton channel. F(1) has five subunits: alpha(3), beta(3), gamma(1), delta(1), epsilon(1). F(0) has three main subunits: a(1), b(2) and c(10-14). The alpha and beta chains form an alternating ring which encloses part of the gamma chain. F(1) is attached to F(0) by a central stalk formed by the gamma and epsilon chains, while a peripheral stalk is formed by the delta and b chains.

The protein localises to the cell membrane. F(1)F(0) ATP synthase produces ATP from ADP in the presence of a proton or sodium gradient. F-type ATPases consist of two structural domains, F(1) containing the extramembraneous catalytic core and F(0) containing the membrane proton channel, linked together by a central stalk and a peripheral stalk. During catalysis, ATP synthesis in the catalytic domain of F(1) is coupled via a rotary mechanism of the central stalk subunits to proton translocation. Functionally, component of the F(0) channel, it forms part of the peripheral stalk, linking F(1) to F(0). The protein is ATP synthase subunit b of Mycolicibacterium gilvum (strain PYR-GCK) (Mycobacterium gilvum (strain PYR-GCK)).